We begin with the raw amino-acid sequence, 204 residues long: Thymidylate kinase (204 aa).

Belongs to the thymidylate kinase family. In terms of assembly, homodimer; the dimer arrangement is orthogonal and not antiparallel as in human enzyme.

It carries out the reaction dTMP + ATP = dTDP + ADP. The protein operates within pyrimidine metabolism; dTTP biosynthesis. Functionally, poxvirus TMP kinase is able to phosphorylate dTMP, dUMP and also dGMP from any purine and pyrimidine nucleoside triphosphate. The large substrate specificity is explained by the presence of a canal connecting the edge of the dimer interface to the TMP base binding pocket, canal not found in the human homolog. The protein is Thymidylate kinase (OPG178) of Cynomys gunnisoni (Gunnison's prairie dog).